Reading from the N-terminus, the 310-residue chain is Malate dehydrogenase (310 aa).

NAD(+) is bound by residues 7–13 and Asp-34; that span reads GAAGGIG. Substrate is bound by residues Arg-81 and Arg-87. NAD(+) contacts are provided by residues Asn-94 and 117–119; that span reads ITN. Substrate contacts are provided by Asn-119 and Arg-153. His-177 acts as the Proton acceptor in catalysis. An NAD(+)-binding site is contributed by Met-227.

It belongs to the LDH/MDH superfamily. MDH type 1 family. Homodimer.

The catalysed reaction is (S)-malate + NAD(+) = oxaloacetate + NADH + H(+). Its function is as follows. Catalyzes the reversible oxidation of malate to oxaloacetate. This Vibrio vulnificus (strain CMCP6) protein is Malate dehydrogenase.